The primary structure comprises 328 residues: Tetraacyldisaccharide 4'-kinase (328 aa).

Position 55–62 (55–62 (TAGGNGKT)) interacts with ATP.

The protein belongs to the LpxK family.

It catalyses the reaction lipid A disaccharide (E. coli) + ATP = lipid IVA (E. coli) + ADP + H(+). It participates in glycolipid biosynthesis; lipid IV(A) biosynthesis; lipid IV(A) from (3R)-3-hydroxytetradecanoyl-[acyl-carrier-protein] and UDP-N-acetyl-alpha-D-glucosamine: step 6/6. In terms of biological role, transfers the gamma-phosphate of ATP to the 4'-position of a tetraacyldisaccharide 1-phosphate intermediate (termed DS-1-P) to form tetraacyldisaccharide 1,4'-bis-phosphate (lipid IVA). The sequence is that of Tetraacyldisaccharide 4'-kinase (lpxK) from Escherichia coli (strain K12).